A 596-amino-acid chain; its full sequence is MKHIRNFSIIAHIDHGKSTLSDRLIQVCGGLSDREMDAQVLDSMDLERERGITIKAQSVTLEYKAKNGETYQLNFIDTPGHVDFSYEVSRSLAACEGALLVVDAGQGVEAQTLANCYTALDMNLDVVPILNKIDLPQADPERVAAEIEDIVGIDAMNAVRCSAKTGVGIDEVLEVIVDQIPPPEGDPEAPLQALIIDSWFDSYLGVVSLVRIKNGVLKKGDKFKVMSTGQNHTADRVGIFTPKQTDKTELKTGEVGFVIAGIKEIHGAPVGDTLTLAKHGAEKPLPGFKKVKPQVYAGVFPISTDEYENFRDALNKLSLNDASLFFEPESSSALGFGFRIGYLGLLHMEIIQERLEREYDLDLITTAPTVVYEVLLTSGETIYVDNPADLPAINNIEEMREPIVEANILVPKEYLGNVITLCIEKRGTQVNMVYHGNQVAVTYHLPMAEVVMDFFDRLKSTSRGYASLEYNFIRFDPADMVRLDILINGDRVDALAMIIHRSNIRHRGLALVEKMKELIPRQMFDIAIQAAVGSQIIARSTVKALRKDVTAKCYGGDVSRKKKLLNKQKEGKKRMKQVGNVEVPQEAFLAVLKLNE.

Positions 2–184 constitute a tr-type G domain; the sequence is KHIRNFSIIA…VIVDQIPPPE (183 aa). GTP is bound by residues 14–19 and 131–134; these read DHGKST and NKID.

It belongs to the TRAFAC class translation factor GTPase superfamily. Classic translation factor GTPase family. LepA subfamily.

The protein localises to the cell inner membrane. The catalysed reaction is GTP + H2O = GDP + phosphate + H(+). In terms of biological role, required for accurate and efficient protein synthesis under certain stress conditions. May act as a fidelity factor of the translation reaction, by catalyzing a one-codon backward translocation of tRNAs on improperly translocated ribosomes. Back-translocation proceeds from a post-translocation (POST) complex to a pre-translocation (PRE) complex, thus giving elongation factor G a second chance to translocate the tRNAs correctly. Binds to ribosomes in a GTP-dependent manner. The protein is Elongation factor 4 of Shewanella sp. (strain ANA-3).